Consider the following 253-residue polypeptide: NAD-dependent protein deacetylase (253 aa).

One can recognise a Deacetylase sirtuin-type domain in the interval 3–253; that stretch reads APSLSSGVEQ…GETLGPFVGN (251 aa). Ala-29, Thr-33, Phe-40, Arg-41, Gln-106, Ile-108, Asp-109, and His-126 together coordinate NAD(+). A nicotinamide-binding site is contributed by Phe-40. Ile-108 and Asp-109 together coordinate nicotinamide. The active-site Proton acceptor is His-126. The Zn(2+) site is built by Cys-134, Cys-137, Cys-159, and Cys-162. The NAD(+) site is built by Ser-200, Ser-201, Asn-225, Asp-242, and Ile-243.

This sequence belongs to the sirtuin family. Class U subfamily. It depends on Zn(2+) as a cofactor.

Its subcellular location is the cytoplasm. It carries out the reaction N(6)-acetyl-L-lysyl-[protein] + NAD(+) + H2O = 2''-O-acetyl-ADP-D-ribose + nicotinamide + L-lysyl-[protein]. Its function is as follows. NAD-dependent protein deacetylase which modulates the activities of several enzymes which are inactive in their acetylated form. This chain is NAD-dependent protein deacetylase, found in Rhodopseudomonas palustris (strain ATCC BAA-98 / CGA009).